Here is a 535-residue protein sequence, read N- to C-terminus: MAYLLREGTQRSTGNEVILNNIAVAKILLEMLKSSLGPKGLDKMLVEGQDITITNDGATIVKNMEVQHPTAKLLIETAKTVDTEVGDGTTSVVVLAGLLLEKAEDLLNQKIHPTVIIEGYRKALSSSLELLKSIADKISPEDRKIVHDLVYTTLSSKFFSTEHTLEKIINLVIEASLAVLDKRDGTYDLDIKNIKIVKVNGGEFDDSELVNGIVVDKEPTNENMPKRAENVKVMLADFPLKLEKTEISMKLGISDPTQIKGYLDEQTAYVKQMVDKIKAMGVKLFITQKDIDEVASYLMGKSGIIALKNVKRSDIELLSRATGAKIASSMKDANESDLGEAKLVEVRNLGKNKYLFIQSDKAKAVTVIIKGSNNMVTDEAERSLNDAFNSIRNLLLEPYIVAGGGAVEEELAKRLRENAGKVPGKEQLAFNAFADALEEYVSILSETAGMDPISALTEIRHKHANGLKNAGIDIVKARIYDNMLELKVIDSLKVKEQVLKSATEAATAILKIDDMIAAAPAKQQPQPQQPNPYLG.

This sequence belongs to the TCP-1 chaperonin family. Forms a heterooligomeric complex of two stacked nine-membered rings; one of alpha and the other of beta subunits.

Its subcellular location is the cytoplasm. It catalyses the reaction ATP + H2O = ADP + phosphate + H(+). Functionally, molecular chaperone; binds unfolded polypeptides in vitro, and has a weak ATPase activity. In Saccharolobus shibatae (strain ATCC 51178 / DSM 5389 / JCM 8931 / NBRC 15437 / B12) (Sulfolobus shibatae), this protein is Thermosome subunit gamma (thsC).